Reading from the N-terminus, the 417-residue chain is Phosphoglycerate kinase (417 aa).

(2R)-3-phosphoglycerate contacts are provided by Val-23, Asp-24, Phe-25, Asn-26, Gln-38, Arg-39, Ser-62, His-63, Gly-65, Arg-66, Leu-121, Arg-122, His-169, and Arg-170. Gly-213 is a binding site for ADP. Gly-213 provides a ligand contact to CDP. AMP is bound by residues Ala-214 and Lys-215. ATP is bound at residue Ala-214. Ala-214 contributes to the Mg(2+) binding site. Asp-218 serves as a coordination point for CDP. Residue Asp-218 participates in Mg(2+) binding. An AMP-binding site is contributed by Lys-219. Lys-219 contributes to the ATP binding site. ADP is bound at residue Gly-237. Residue Gly-237 coordinates CDP. 2 residues coordinate AMP: Gly-238 and Gly-312. ATP-binding residues include Gly-238 and Gly-312. CDP is bound by residues Gly-337 and Phe-342. Phe-342 is an ADP binding site. An AMP-binding site is contributed by Glu-343. ATP is bound by residues Glu-343, Asp-374, and Thr-375. Position 374 (Asp-374) interacts with Mg(2+).

The protein belongs to the phosphoglycerate kinase family. In terms of assembly, monomer. Mg(2+) is required as a cofactor.

It localises to the cytoplasm. The protein resides in the mitochondrion. It carries out the reaction (2R)-3-phosphoglycerate + ATP = (2R)-3-phospho-glyceroyl phosphate + ADP. It functions in the pathway carbohydrate degradation; glycolysis; pyruvate from D-glyceraldehyde 3-phosphate: step 2/5. Catalyzes one of the two ATP producing reactions in the glycolytic pathway via the reversible conversion of 1,3-diphosphoglycerate to 3-phosphoglycerate. Both L- and D- forms of purine and pyrimidine nucleotides can be used as substrates, but the activity is much lower on pyrimidines. Negatively regulates the biosynthesis of acetyl-CoA from pyruvate in the mitochondrion. In Yarrowia lipolytica (strain CLIB 122 / E 150) (Yeast), this protein is Phosphoglycerate kinase (PGK1).